A 3491-amino-acid polypeptide reads, in one-letter code: MPTRYRGADRYGNLGYDKVLQSKADAAKRRGLLFDHGSETYECPRCGEIWRNLDDYMAEGGKMHPKKCLPEECDSDEEQISSCNAALIHEKWGDLDSDTSSKLSEFYKEPSILTYTTRTHCVVEKMRSMTAPQCIEDIVGVRLHGRTAWFFSKDPTLQYGHHPIYYDTHPWNDELDKYLGGAKYNTALVQVYDGTRDLPYHKDDEPCYDITNNPIRTVNVTGTGDLCISKDKRRLYETIPMTSGTVITFPATMQENFYHAVRNPSAGRISITFRNQIRTVERQVAHSANKRWVPIVEARVTTNESRRGDNKQFQEAQSKLQTKTTINFGEFAAEVDGYYPTLSQDHKPALPKIIPELGLPTVDFIYVGNMRVPIDFKKNNVPAIVDTARHVAKIIDSQALTSEPIKVFTEQREVVGNVVTCTGTGFSVADAKEAKALLNGLMYNRASNLFICPSCSDAAVLPEALLTLEHKRSCELASMKKISLARNMQVHVKQEAVARLISQQNSISVPIATLSSCVRGSADTTQVSLHIDEEDSIVDAIHLPNDFITCDHEHAFETDSASDNDVETMKKSEKRRKRRKRNPPPVRQVITRAPVSNIICDVILTCLETQIPVEFIGKSCITFKPVRVGPVHTVGIQLKHQLHKTGFEVDDLPDRETTSDIILAATRALRRLRHAHSNAQQVHNSDITFGTSGAILPWSWLAHDVIVEGPVQDSLVVRGRNVVSGHVTNALNLQQDCLADDYLQYSEELQPLHDDLSELKPLNVINNELIRQNMHITTLYSNMSKLQNDALATKAEMKLPLFGVAQLVVNQLKYNTTTHEWGERGDYVRKFVGKFFADFPTTQVPKQYMTRTTNGHIRITAYKALSLTSDPEIMMSRRMTQPMLTTAKQADCVFQSTTGATCTSASCTTNSSGVVLSNKCADPAPNTLRVRTMWDDIIIELPLQGGRVHVPLEGLCFSTIFLHMYLLVPDESVKLFHRTVTERAMPSLGQWPTLRHLATWVLNLVAMFPVLSTTPMPEILVHHESQSVHIPDCLGTATSGYHRLNIVTPYDFIIFATEIGRNGCQEYRVGGFAHDIKYTVSLMQDKRKLLHELMLTPTWAFYALSSPTLLKILYRSGALKRTYEHAVMANHNAVDLVHELNFLPERVSRAQTLQDEITAWEANVGRVLQQVDGYLTRNHDPPLQRWYADASARLQHLKIDVDLLKNGFRSSQREHVEKKEQLLCDSFERLYNEQNSSLESLKTRCGMGSARALIKPSGKCESPEPAKQLSCKDLICSTKDKYALMLYTQADALKRKIVAGSQSAFTTVCAGVAYRATKVMLRTPFNLLNALNTYSLLIAAVNVMVLVQNYRRDQRKRAQYVNNLETQSMIRHYFAHLEQYIVNYVPRDEQFEVIKAKFDEEFPEYNVMFKEVYKERIQFQSADEGKNMCKIFASAILVMMVFDAHRADLMYKSFSQVRALFNTLYDSGNPFNIIFQAERTIAPTMDVIIQEPKPAIPSTSSCTFETWFRNCVNANNVIPVIPECDLLDFTRDTASSVVATLTSSVKREFVIRGFVGSGKSTYLPHLLTKHGKVLLCEPVRVLASNVFEALSGSPFYQSPTLLMRGTTKFGSGKITVATSGYAANYYNANRHRLNEFAYIIFDESHQHTAHNFLLRSILDVIGYEGTVLHVSATPIGKEIPFRTMHPVEVVNMSTLSFEDFAIGQRKQVRCDVFNKGANILVYVASYNDVDRMSTLLLERGLRVKKIDARTVANVNNITCDGSDGEPLYLVATNIVENGVTLNVDVVVDFGLCVKPVINALQRRVDYVKTPITWGQRIQRNGRVGRYKNGFCLNVGDVYKTPPIISEDVALESALMCFAANVPPIFDNVDPALFGQVTRPQVQTAQMFELPIYITTPMISDAGALQSDIYQVIKKFVLREGSIQLTQDATYLSNMSNWKTIADYFPDISDTHAMRHEKVPFFVKDFGENSYIALAEAIRKARNKSLGARGKLYGDVDATALLLQTDPGSLDRSIMIVETELVAQRSKLEDLNHHVHESTGMFQRYVSHLNHCLRGRYQTDQIQKNIEVLSNMRSTLVGYRQVVDKVEPEEIPHFVQQNPNITMIIDFQSDRTKADGFVKHGINGIYNYTKIASDTFSLLLIACVVIYYVVQYFFREMKSHITFEASGSRRNRLHLRDNKLIKGGYTWAGPSDDMEREFGPEYALKRDKFSEKKARKHMRERIQPRTNMGVKLAPFQVFYGFDVADYDVLQLFDPITGVKIDMDPRATAKEITEEVEDTPFNKEVWSDTHMPEKIQATFVKKGGVNREDVLKQVRVDMTTHNPTMVTGSGGIMGYPEHKGDFRQTGPPKFSIVPEGRSTIKSGNNIAPFISAMGTIKNVYMNGDFDTLACTQIGNKLVVNAHIFMEPVKKQELILQHGVYELPNNGTINIKHVPGIDMVIQTLPMDVPLARQIKAYRGPIPGELIRLLKIERNTKTNSTSLSDPGTARVGPGTIWYHNITTKHGDCGSLVLSEKDNKIVGIHTGQQDGTNLNLFAPITKDAIVAIETVLPGELNDWVFTPDMLDVGSNNAIRKQASDPFPVVKKLLEGITFQNNRTTTTDSVSNTAILPARKYWVASDLPVNIKYQCDMPTFFNTRHTYEGESQPFMAYLRECGDAETFFRPLLSHYIPSNLNGDAFKKDFFKYGKPVPVGLVHGPSFKIASDRVIKRFERVGYERHSIPFEFDAEAIRDDLNKHAAMGAQYVGKKEQHLDGISEEQFCDEFVASCCRLANNCDGVWKGSLKAELRSKEKVQENKTRVFTSAPYDVLLGGKACVMHFNKKFYANNTKGPWTVGINKLGLGWHRLLKSLPEGFVYGTGDGSQFDSSLTPLLINEVCRIRMYFMQDDELGQAMLRGLYRQIIWTLISMPDGSVVRKAKGNPSGQPSTVDDNTIMVMLAVEYVFAYLGITQEEMDTIFKYYANGDDLIFAIHPDRESILNEFTHLFAHLGLNYIFEDRTRNRAELEYMSLTGIEREGFYIPKLSRERISSIVQWRRKGDTRAMFDALNAAILESWGYDDLTYWLRKYYEWLIINRYDIDLPEGEKLPYHTETAVETLYTCDDNTTVYDGRYDFEVPTDASGGVFIIDFQSSSGTDTPPVIPPATSEPALQPVLTRQTSRPPTPPNTILTGQQQQQLMPKSSQPYQLEPLLAPTGVQQPTFGTFGMPQAQQTTTEPVVAAARVRGKQKEGDTSLSQVRDHRRLSPERIVRHDDDLAPPNESTSGESSHYDELTLPDVPRDKRKGLGARLKGKPIITQTQIYNYRPAFGSIHNNKATDIELEAWKKQIADYFQVDDVSTLILGFMAYVIENGTSPEIFTNQKFVMATSSGEQREYPLAPFRSRSVELRKIMRRFSEEAIDYIQIQREHNPQYVPRQAVVRNVKRAIYFPYCFDFIDETILTPDALEIVHQMKAAALESASSKVLGLDGGSARAIDTERHTTEDATARTHNLRGAAMMA.

One can recognise a Fe2OG dioxygenase domain in the interval Lys-183 to Ile-277. Residues His-201, Asp-203, and His-259 each coordinate Fe cation. Residue Arg-268 coordinates 2-oxoglutarate. The tract at residues Asp-559 to Gln-588 is disordered. Positions Ser-572–Asn-582 are enriched in basic residues. In terms of domain architecture, Peptidase S30 spans Val-589–Tyr-745. Active-site for P1 proteinase activity residues include His-640, Asp-651, and Ser-692. The Peptidase C6 domain occupies Val-948–Gly-1070. Active-site for helper component proteinase activity residues include Cys-956 and His-1029. Positions Thr-1540–Met-1692 constitute a Helicase ATP-binding domain. Gly-1553–Ser-1560 serves as a coordination point for ATP. A DEAH box motif is present at residues Asp-1642–His-1645. The region spanning Ser-1696–Asp-1869 is the Helicase C-terminal domain. Position 2238 is an O-(5'-phospho-RNA)-tyrosine (Tyr-2238). The 217-residue stretch at Gly-2354–Arg-2570 folds into the Peptidase C4 domain. Residues His-2400, Asp-2435, and Cys-2504 each act as for nuclear inclusion protein A activity in the active site. The region spanning Phe-2850–Leu-2974 is the RdRp catalytic domain. 2 disordered regions span residues Met-3200–Leu-3279 and Arg-3471–Ala-3491. Basic and acidic residues predominate over residues Arg-3236–Asp-3248. A Phosphothreonine modification is found at Thr-3473.

It belongs to the potyviridae genome polyprotein family. Fe(2+) is required as a cofactor. In terms of processing, VPg is uridylylated by the polymerase and is covalently attached to the 5'-end of the genomic RNA. This uridylylated form acts as a nucleotide-peptide primer for the polymerase. Post-translationally, genome polyprotein of potyviruses undergoes post-translational proteolytic processing by the main proteinase NIa-pro resulting in the production of at least ten individual proteins. The P1 proteinase and the HC-pro cleave only their respective C-termini autocatalytically. 6K1 is essential for proper proteolytic separation of P3 from CI.

It is found in the host cytoplasmic vesicle. The protein localises to the virion. The catalysed reaction is RNA(n) + a ribonucleoside 5'-triphosphate = RNA(n+1) + diphosphate. The enzyme catalyses Hydrolyzes glutaminyl bonds, and activity is further restricted by preferences for the amino acids in P6 - P1' that vary with the species of potyvirus, e.g. Glu-Xaa-Xaa-Tyr-Xaa-Gln-|-(Ser or Gly) for the enzyme from tobacco etch virus. The natural substrate is the viral polyprotein, but other proteins and oligopeptides containing the appropriate consensus sequence are also cleaved.. It carries out the reaction Hydrolyzes a Gly-|-Gly bond at its own C-terminus, commonly in the sequence -Tyr-Xaa-Val-Gly-|-Gly, in the processing of the potyviral polyprotein.. Required for aphid transmission and also has proteolytic activity. Only cleaves a Gly-Gly dipeptide at its own C-terminus. Interacts with virions and aphid stylets. Acts as a suppressor of RNA-mediated gene silencing, also known as post-transcriptional gene silencing (PTGS), a mechanism of plant viral defense that limits the accumulation of viral RNAs. May have RNA-binding activity. Its function is as follows. Has helicase activity. It may be involved in replication. Functionally, indispensable for virus replication. Reduces the abundance of host transcripts related to jasmonic acid biosynthesis therefore altering the host defenses. In order to increase its own stability, decreases host protein degradation pathways. In terms of biological role, indispensable for virus replication. Mediates the cap-independent, EIF4E-dependent translation of viral genomic RNAs. Binds to the cap-binding site of host EIF4E and thus interferes with the host EIF4E-dependent mRNA export and translation. VPg-RNA directly binds EIF4E and is a template for transcription. Also forms trimeric complexes with EIF4E-EIF4G, which are templates for translation. Its function is as follows. Has RNA-binding and proteolytic activities. Functionally, an RNA-dependent RNA polymerase that plays an essential role in the virus replication. In terms of biological role, involved in aphid transmission, cell-to-cell and systemis movement, encapsidation of the viral RNA and in the regulation of viral RNA amplification. This chain is Genome polyprotein, found in Blackberry virus Y (isolate Blackberry plant/USA:Arkansas/C3ARK/2005) (BVY).